The primary structure comprises 362 residues: Peptide chain release factor 1 (362 aa).

N5-methylglutamine is present on glutamine 235.

Belongs to the prokaryotic/mitochondrial release factor family. In terms of processing, methylated by PrmC. Methylation increases the termination efficiency of RF1.

The protein localises to the cytoplasm. Its function is as follows. Peptide chain release factor 1 directs the termination of translation in response to the peptide chain termination codons UAG and UAA. The sequence is that of Peptide chain release factor 1 from Acinetobacter baumannii (strain AYE).